The following is a 221-amino-acid chain: Octanoyltransferase (221 aa).

The BPL/LPL catalytic domain maps to Gly-31 to Pro-216. Substrate is bound by residues Arg-76–His-83, Ala-145–Gly-147, and Gly-159–Ala-161. Cys-177 serves as the catalytic Acyl-thioester intermediate.

It belongs to the LipB family.

The protein localises to the cytoplasm. The enzyme catalyses octanoyl-[ACP] + L-lysyl-[protein] = N(6)-octanoyl-L-lysyl-[protein] + holo-[ACP] + H(+). Its pathway is protein modification; protein lipoylation via endogenous pathway; protein N(6)-(lipoyl)lysine from octanoyl-[acyl-carrier-protein]: step 1/2. Functionally, catalyzes the transfer of endogenously produced octanoic acid from octanoyl-acyl-carrier-protein onto the lipoyl domains of lipoate-dependent enzymes. Lipoyl-ACP can also act as a substrate although octanoyl-ACP is likely to be the physiological substrate. This Chloroflexus aggregans (strain MD-66 / DSM 9485) protein is Octanoyltransferase.